A 339-amino-acid polypeptide reads, in one-letter code: Adenylosuccinate synthetase (339 aa).

GTP is bound by residues 12 to 18 (GDEGKGS) and 42 to 44 (GHS). D13 serves as the catalytic Proton acceptor. Residues D13 and G42 each coordinate Mg(2+). IMP is bound by residues 13–16 (DEGK), 40–43 (NAGH), T127, R141, Q179, T194, and R256. The active-site Proton donor is H43. 252–258 (TVTGRRR) provides a ligand contact to substrate. GTP-binding positions include R258, 284 to 286 (MLD), and 324 to 326 (KTG).

It belongs to the adenylosuccinate synthetase family. Homodimer. The cofactor is Mg(2+).

Its subcellular location is the cytoplasm. The enzyme catalyses IMP + L-aspartate + GTP = N(6)-(1,2-dicarboxyethyl)-AMP + GDP + phosphate + 2 H(+). Its pathway is purine metabolism; AMP biosynthesis via de novo pathway; AMP from IMP: step 1/2. Functionally, plays an important role in the de novo pathway of purine nucleotide biosynthesis. Catalyzes the first committed step in the biosynthesis of AMP from IMP. The chain is Adenylosuccinate synthetase from Pyrococcus horikoshii (strain ATCC 700860 / DSM 12428 / JCM 9974 / NBRC 100139 / OT-3).